A 438-amino-acid polypeptide reads, in one-letter code: Mannose-1-phosphate guanylyltransferase regulatory subunit alpha (438 aa).

The substrate-binding domain stretch occupies residues 2-260 (LKAVILIGGP…PNWWSQLKTA (259 aa)). 2 residues coordinate GDP-alpha-D-mannose: E87 and Q256. Positions 282 to 438 (LANVGIKRGE…SRSFKNEIIL (157 aa)) are hexapeptide repeat domain. The tract at residues 373-402 (TPSDPDPNKPFAKMENPPLFNNEGKLNPSI) is C-loop.

Belongs to the transferase hexapeptide repeat family. Component of the GMPPA-GMPPB mannose-1-phosphate guanylyltransferase complex composed of 4 GMPPA subunits and 8 GMPPB subunits; the complex is organized into three layers, a central layer made up of 2 GMPPA dimers sandwiched between two layers each made up of 2 GMPPB dimers.

Functionally, regulatory subunit of the GMPPA-GMPPB mannose-1-phosphate guanylyltransferase complex; reduces the catalytic activity of GMPPB when part of the complex. Mediates allosteric feedback inhibition of GMPPB catalytic activity upon binding GDP-alpha-D-mannose. Together with GMPPB regulates GDP-alpha-D-mannose levels. The polypeptide is Mannose-1-phosphate guanylyltransferase regulatory subunit alpha (Drosophila melanogaster (Fruit fly)).